The primary structure comprises 160 residues: UPF0262 protein Mrad2831_3513 (160 aa).

It belongs to the UPF0262 family.

In Methylobacterium radiotolerans (strain ATCC 27329 / DSM 1819 / JCM 2831 / NBRC 15690 / NCIMB 10815 / 0-1), this protein is UPF0262 protein Mrad2831_3513.